Consider the following 756-residue polypeptide: Protein O-mannosyl-transferase 2 (756 aa).

Transmembrane regions (helical) follow at residues 64 to 84 (AHVP…TRFY), 110 to 130 (TFFF…AGYL), 156 to 176 (AFCA…VLEL), 179 to 199 (SSTA…CITL), 203 to 223 (ILLD…MVKF), 245 to 265 (CLSG…LVGI), and 293 to 313 (VFGL…IHFI). MIR domains lie at 344–400 (PEYL…VKRL), 410–466 (PELV…VEVC), and 471–528 (GDPV…IEDH). Transmembrane regions (helical) follow at residues 602–622 (PVIW…LTVA), 643–663 (LMEG…PFYI), 672–692 (HYFP…DILL), and 713–733 (SVLL…SYGM).

It belongs to the glycosyltransferase 39 family. As to expression, widely expressed. Has particularly strong expression in ovary, testis, liver, brain, muscle, heart and eye.

It localises to the endoplasmic reticulum membrane. It catalyses the reaction a di-trans,poly-cis-dolichyl beta-D-mannosyl phosphate + L-seryl-[protein] = 3-O-(alpha-D-mannosyl)-L-seryl-[protein] + a di-trans,poly-cis-dolichyl phosphate + H(+). The enzyme catalyses a di-trans,poly-cis-dolichyl beta-D-mannosyl phosphate + L-threonyl-[protein] = 3-O-(alpha-D-mannosyl)-L-threonyl-[protein] + a di-trans,poly-cis-dolichyl phosphate + H(+). It functions in the pathway protein modification; protein glycosylation. Functionally, transfers mannosyl residues to the hydroxyl group of serine or threonine residues. Coexpression of both POMT1 and POMT2 is necessary for enzyme activity, expression of either POMT1 or POMT2 alone is insufficient. This Danio rerio (Zebrafish) protein is Protein O-mannosyl-transferase 2.